We begin with the raw amino-acid sequence, 91 residues long: Teretoxin Tan6.2 (91 aa).

An N-terminal signal peptide occupies residues 1–21 (MATSGRLLCVCLVLGLVFGSL). Positions 22-50 (GYPVMEKKRAGKNFDLGTIANWAWQIGEK) are excised as a propeptide.

The protein belongs to the teretoxin M (TM) superfamily. Post-translationally, contains 3 disulfide bonds. Expressed by the venom duct.

The protein localises to the secreted. This is Teretoxin Tan6.2 from Terebra anilis (Auger snail).